Here is a 263-residue protein sequence, read N- to C-terminus: Endonuclease 8 (263 aa).

Pro-2 serves as the catalytic Schiff-base intermediate with DNA. The active-site Proton donor is Glu-3. Catalysis depends on Lys-53, which acts as the Proton donor; for beta-elimination activity. Positions 70, 125, and 169 each coordinate DNA. The FPG-type zinc-finger motif lies at 229–263; sequence KVFHRDGERCERCGGVIEKTTLSSRPFYWCPGCQH. Residue Arg-253 is the Proton donor; for delta-elimination activity of the active site.

The protein belongs to the FPG family. Requires Zn(2+) as cofactor.

The catalysed reaction is 2'-deoxyribonucleotide-(2'-deoxyribose 5'-phosphate)-2'-deoxyribonucleotide-DNA = a 3'-end 2'-deoxyribonucleotide-(2,3-dehydro-2,3-deoxyribose 5'-phosphate)-DNA + a 5'-end 5'-phospho-2'-deoxyribonucleoside-DNA + H(+). Functionally, involved in base excision repair of DNA damaged by oxidation or by mutagenic agents. Acts as a DNA glycosylase that recognizes and removes damaged bases. Has a preference for oxidized pyrimidines, such as thymine glycol, 5,6-dihydrouracil and 5,6-dihydrothymine. Has AP (apurinic/apyrimidinic) lyase activity and introduces nicks in the DNA strand. Cleaves the DNA backbone by beta-delta elimination to generate a single-strand break at the site of the removed base with both 3'- and 5'-phosphates. The polypeptide is Endonuclease 8 (Klebsiella pneumoniae (strain 342)).